A 492-amino-acid chain; its full sequence is NADH-ubiquinone oxidoreductase chain 4 (492 aa).

The next 15 membrane-spanning stretches (helical) occupy residues 9-29 (LILT…IPSA), 36-56 (NFAL…WIQF), 63-83 (FQFS…TIGI), 86-106 (ISLF…LVSW), 115-135 (DYLI…SVLD), 136-156 (LLLF…IVGV), 170-190 (FFLY…NIYF), 211-231 (IFLW…IPFH), 242-262 (PTAG…YGFL), 269-289 (FPVA…VAII), 304-324 (IIAY…FSLN), 332-352 (ILLM…IGVL), 370-390 (VMPL…GFPG), 410-430 (TLTL…IWLF), and 454-474 (FWIL…PNSF).

This sequence belongs to the complex I subunit 4 family.

Its subcellular location is the mitochondrion membrane. It carries out the reaction a ubiquinone + NADH + 5 H(+)(in) = a ubiquinol + NAD(+) + 4 H(+)(out). Core subunit of the mitochondrial membrane respiratory chain NADH dehydrogenase (Complex I) that is believed to belong to the minimal assembly required for catalysis. Complex I functions in the transfer of electrons from NADH to the respiratory chain. The immediate electron acceptor for the enzyme is believed to be ubiquinone. The protein is NADH-ubiquinone oxidoreductase chain 4 (ND4) of Chondrus crispus (Carrageen Irish moss).